The following is a 394-amino-acid chain: MVVFSKTAALVLGLSSAVSAAPAPTRKGFTINQIARPANKTRTINLPGMYARSLAKFGGTVPQSVKEAASKGSAVTTPQNNDEEYLTPVTVGKSTLHLDFDTGSADLWVFSDELPSSEQTGHDLYTPSSSATKLSGYTWDISYGDGSSASGDVYRDTVTVGGVTTNKQAVEAASKISSEFVQNTANDGLLGLAFSSINTVQPKAQTTFFDTVKSQLDSPLFAVQLKHDAPGVYDFGYIDDSKYTGSITYTDADSSQGYWGFSTDGYSIGDGSSSSSGFSAIADTGTTLILLDDEIVSAYYEQVSGAQESEEAGGYVFSCSTNPPDFTVVIGDYKAVVPGKYINYAPISTGSSTCFGGIQSNSGLGLSILGDVFLKSQYVVFNSEGPKLGFAAQA.

A signal peptide spans 1 to 20 (MVVFSKTAALVLGLSSAVSA). The propeptide at 21–69 (APAPTRKGFTINQIARPANKTRTINLPGMYARSLAKFGGTVPQSVKEAA) is activation peptide. Residues 85-391 (YLTPVTVGKS…NSEGPKLGFA (307 aa)) form the Peptidase A1 domain. Catalysis depends on residues Asp101 and Asp283. Residues Cys319 and Cys354 are joined by a disulfide bond.

The protein belongs to the peptidase A1 family. In terms of assembly, monomer.

It is found in the secreted. The enzyme catalyses Hydrolysis of proteins with broad specificity. Generally favors hydrophobic residues in P1 and P1', but also accepts Lys in P1, which leads to activation of trypsinogen. Does not clot milk.. Secreted aspartic endopeptidase that allows assimilation of proteinaceous substrates. The scissile peptide bond is attacked by a nucleophilic water molecule activated by two aspartic residues in the active site. Shows a broad primary substrate specificity. Favors hydrophobic residues at the P1 and P1' positions, but also accepts a lysine residue in the P1 position, leading to the activation of trypsinogen and chymotrypsinogen A. The chain is Aspergillopepsin-1 (pepA) from Aspergillus niger (strain ATCC MYA-4892 / CBS 513.88 / FGSC A1513).